The chain runs to 313 residues: Dimethyladenosine transferase (313 aa).

Positions 1 to 22 (MPKIKSAASGRRRERQQQRGQL) are disordered. S-adenosyl-L-methionine contacts are provided by His37, Leu39, Gly64, Glu85, Asp113, and Asn128.

This sequence belongs to the class I-like SAM-binding methyltransferase superfamily. rRNA adenine N(6)-methyltransferase family. In terms of assembly, part of the small subunit (SSU) processome, composed of more than 70 proteins and the RNA chaperone small nucleolar RNA (snoRNA) U3.

It is found in the nucleus. Its subcellular location is the nucleoplasm. The protein resides in the nucleolus. The catalysed reaction is adenosine(1779)/adenosine(1780) in 18S rRNA + 4 S-adenosyl-L-methionine = N(6)-dimethyladenosine(1779)/N(6)-dimethyladenosine(1780) in 18S rRNA + 4 S-adenosyl-L-homocysteine + 4 H(+). In terms of biological role, specifically dimethylates two adjacent adenosines in the loop of a conserved hairpin near the 3'-end of 18S rRNA in the 40S particle. Involved in the pre-rRNA processing steps leading to small-subunit rRNA production independently of its RNA-modifying catalytic activity. Part of the small subunit (SSU) processome, first precursor of the small eukaryotic ribosomal subunit. During the assembly of the SSU processome in the nucleolus, many ribosome biogenesis factors, an RNA chaperone and ribosomal proteins associate with the nascent pre-rRNA and work in concert to generate RNA folding, modifications, rearrangements and cleavage as well as targeted degradation of pre-ribosomal RNA by the RNA exosome. In Bos taurus (Bovine), this protein is Dimethyladenosine transferase (DIMT1).